Reading from the N-terminus, the 348-residue chain is MTNDPAEISSRKRRHIDVCLNDEVNYVGVTTGLERYRLPFNALTQTSLADIDLSAEFFGAPLRAPVLIGAMTGGAELSATINRNLATAAQRLGIGMMLGSQRIMLDDARGQRAASSFAVREVAPDVLLIGNIGLAQLTKAAVPAVAAALRRVGANALAVHANSLQEAMQHGGDTDFSGSLGRLRDAADLLDYPVLLKEVGHGIGAAAVAQLLRLPGGLPVSGIDVAGAGGTSWSRVEQLVRYGELRYPELADWGIPTAEAIVEVRQALPAVPLVASGGIRTGMDAAKAIALGADVVAIARPLLAPAIESATAVQGWLQLFLDELRVCLHCCGARDLTSLRDIGVTAIR.

11–12 (RK) serves as a coordination point for substrate. FMN-binding positions include 70-72 (AMT), serine 100, and asparagine 131. 100–102 (SQR) lines the substrate pocket. Glutamine 165 is a substrate binding site. Glutamate 166 provides a ligand contact to Mg(2+). FMN-binding positions include lysine 197, threonine 231, 278-280 (GIR), and 299-300 (AR).

This sequence belongs to the IPP isomerase type 2 family. Homooctamer. Dimer of tetramers. Requires FMN as cofactor. NADPH serves as cofactor. It depends on Mg(2+) as a cofactor.

The protein resides in the cytoplasm. The catalysed reaction is isopentenyl diphosphate = dimethylallyl diphosphate. Its function is as follows. Involved in the biosynthesis of isoprenoids. Catalyzes the 1,3-allylic rearrangement of the homoallylic substrate isopentenyl (IPP) to its allylic isomer, dimethylallyl diphosphate (DMAPP). The sequence is that of Isopentenyl-diphosphate delta-isomerase from Mycobacterium marinum (strain ATCC BAA-535 / M).